The sequence spans 77 residues: MKSLLILFAIVAVVAAFPELERERRGVIAAPALAAVPLAPTIALAAPKVAPAIALAPAPKLLAAPAVVAAPGPWKAW.

A signal peptide spans 1-16 (MKSLLILFAIVAVVAA).

In terms of tissue distribution, expressed in the epidermis, hypopharyngeal glands, fat body, trachea, esophagus and stomach.

The protein resides in the secreted. In terms of biological role, antimicrobial peptide that binds cell wall carbohydrates of microbial symbionts and induces structural damage. Binds the cell wall carbohydrates mannan, N-acetyl-D-glucosamine and lipopolysaccharide. Can target fungi, Gram-negative and Gram-positive bacteria. The polypeptide is Apidermin 2 (Apis mellifera (Honeybee)).